The chain runs to 215 residues: Adenylate kinase (215 aa).

10–15 (GAGKGT) provides a ligand contact to ATP. The NMP stretch occupies residues 30-59 (STGDMFRAAMKNETEMGKLAKSFIDKGELV). Residues Thr-31, Arg-36, 57–59 (ELV), 86–89 (GYPR), and Gln-93 contribute to the AMP site. The LID stretch occupies residues 127-165 (GRYICRNCGATYHKIFNPTKVEGTCDVCGSHDLYQRADD). Arg-128 serves as a coordination point for ATP. Zn(2+)-binding residues include Cys-131 and Cys-134. An ATP-binding site is contributed by 137 to 138 (TY). Cys-151 and Cys-154 together coordinate Zn(2+). AMP contacts are provided by Arg-162 and Arg-173. Residue Gln-201 coordinates ATP.

This sequence belongs to the adenylate kinase family. In terms of assembly, monomer.

The protein localises to the cytoplasm. It catalyses the reaction AMP + ATP = 2 ADP. Its pathway is purine metabolism; AMP biosynthesis via salvage pathway; AMP from ADP: step 1/1. Catalyzes the reversible transfer of the terminal phosphate group between ATP and AMP. Plays an important role in cellular energy homeostasis and in adenine nucleotide metabolism. This is Adenylate kinase from Lactococcus lactis subsp. cremoris (strain SK11).